The sequence spans 124 residues: UPF0538 protein (124 aa).

Belongs to the UPF0538 family.

The polypeptide is UPF0538 protein (Dictyostelium discoideum (Social amoeba)).